The following is a 476-amino-acid chain: Glycogen synthase (476 aa).

Lysine 15 contributes to the ADP-alpha-D-glucose binding site.

This sequence belongs to the glycosyltransferase 1 family. Bacterial/plant glycogen synthase subfamily.

It carries out the reaction [(1-&gt;4)-alpha-D-glucosyl](n) + ADP-alpha-D-glucose = [(1-&gt;4)-alpha-D-glucosyl](n+1) + ADP + H(+). It functions in the pathway glycan biosynthesis; glycogen biosynthesis. In terms of biological role, synthesizes alpha-1,4-glucan chains using ADP-glucose. The chain is Glycogen synthase from Streptococcus mutans serotype c (strain ATCC 700610 / UA159).